Consider the following 338-residue polypeptide: MAKSGLLLIHPAITTTPEEVEKAKADAVAADVKIANQFLINKVNEGSVKLQKGIYDVIYYLTPEAPDAILFPKKLIGALNEALKVGGVLYGLSDKYKIDALVNDFDIVSDSGKYHWVKKVNMAVKAEPVAVPLKKSEKSEPSKTLPSFKKAGESKLPSFKKAANKPLPTFKKKVEEAKPKVEARVHKAENDDDELEDEEDENLFDASRSKYFDEDDSESLDEDDLLNEEDAKNIGGITMITCGKSKTKKKKACKDCSCGIKEEEEAEIDNIRSQQDTVVKFTEDELTEIDFTIDGKKVGGCGSCSLGDAFRCTGCPYLGLPAFKPGEPINLDSITDDL.

Residues 1 to 165 (MAKSGLLLIH…LPSFKKAANK (165 aa)) are N-terminal SAM-like domain. Residues 166–232 (PLPTFKKKVE…DDLLNEEDAK (67 aa)) form a linker region. The disordered stretch occupies residues 181–223 (VEARVHKAENDDDELEDEEDENLFDASRSKYFDEDDSESLDED). 2 stretches are compositionally biased toward acidic residues: residues 190–203 (NDDDELEDEEDENL) and 213–223 (DEDDSESLDED). [2Fe-2S] cluster contacts are provided by cysteine 242, cysteine 253, cysteine 256, and cysteine 258. The segment at 242 to 258 (CGKSKTKKKKACKDCSC) is fe-S binding site A. Cysteine 301, cysteine 304, cysteine 312, and cysteine 315 together coordinate [4Fe-4S] cluster. Short sequence motifs (cx2C motif) lie at residues 301–304 (CGSC) and 312–315 (CTGC). The fe-S binding site B stretch occupies residues 301-315 (CGSCSLGDAFRCTGC).

Belongs to the anamorsin family. In terms of assembly, monomer. Interacts with TAH18. Interacts with MIA40. Requires [2Fe-2S] cluster as cofactor. [4Fe-4S] cluster serves as cofactor.

The protein resides in the cytoplasm. Its subcellular location is the mitochondrion intermembrane space. In terms of biological role, component of the cytosolic iron-sulfur (Fe-S) protein assembly (CIA) machinery required for the maturation of extramitochondrial Fe-S proteins. Part of an electron transfer chain functioning in an early step of cytosolic Fe-S biogenesis, facilitating the de novo assembly of a [4Fe-4S] cluster on the scaffold complex CFD1-NBP35. Electrons are transferred to DRE2 from NADPH via the FAD- and FMN-containing protein TAH18. TAH18-DRE2 are also required for the assembly of the diferric tyrosyl radical cofactor of ribonucleotide reductase (RNR), probably by providing electrons for reduction during radical cofactor maturation in the catalytic small subunit RNR2. The chain is Fe-S cluster assembly protein DRE2 from Candida glabrata (strain ATCC 2001 / BCRC 20586 / JCM 3761 / NBRC 0622 / NRRL Y-65 / CBS 138) (Yeast).